Consider the following 311-residue polypeptide: Ribosomal protein L11 methyltransferase (311 aa).

S-adenosyl-L-methionine-binding residues include T162, G183, D205, and N248.

It belongs to the methyltransferase superfamily. PrmA family.

Its subcellular location is the cytoplasm. The enzyme catalyses L-lysyl-[protein] + 3 S-adenosyl-L-methionine = N(6),N(6),N(6)-trimethyl-L-lysyl-[protein] + 3 S-adenosyl-L-homocysteine + 3 H(+). Functionally, methylates ribosomal protein L11. The polypeptide is Ribosomal protein L11 methyltransferase (Bacillus subtilis (strain 168)).